The following is a 217-amino-acid chain: MSKITSSQVREHVKELLKYSNETKKRNFLETVELQVGLKNYDPQRDKRFSGSLKLPNCPRPNMSICIFGDAFDVDRAKSCGVDAMSVDDLKKLNKNKKLIKKLSKKYNAFIASEVLIKQVPRLLGPQLSKAGKFPTPVSHNDDLYGKVTDVRSTIKFQLKKVLCLAVAVGNVEMEEDVLVNQILMSVNFFVSLLKKNWQNVGSLVVKSSMGPAFRLY.

Ser-2 is subject to N-acetylserine. Position 47 is an N6-methyllysine; by RKM5 (Lys-47). Ser-79 and Ser-86 each carry phosphoserine.

The protein belongs to the universal ribosomal protein uL1 family. In terms of assembly, component of the large ribosomal subunit (LSU). Mature yeast ribosomes consist of a small (40S) and a large (60S) subunit. The 40S small subunit contains 1 molecule of ribosomal RNA (18S rRNA) and 33 different proteins (encoded by 57 genes). The large 60S subunit contains 3 rRNA molecules (25S, 5.8S and 5S rRNA) and 46 different proteins (encoded by 81 genes). uL1 forms part of the L1 stalk. Post-translationally, N-terminally acetylated by acetyltransferase NatA.

Its subcellular location is the cytoplasm. Its function is as follows. Component of the ribosome, a large ribonucleoprotein complex responsible for the synthesis of proteins in the cell. The small ribosomal subunit (SSU) binds messenger RNAs (mRNAs) and translates the encoded message by selecting cognate aminoacyl-transfer RNA (tRNA) molecules. The large subunit (LSU) contains the ribosomal catalytic site termed the peptidyl transferase center (PTC), which catalyzes the formation of peptide bonds, thereby polymerizing the amino acids delivered by tRNAs into a polypeptide chain. The nascent polypeptides leave the ribosome through a tunnel in the LSU and interact with protein factors that function in enzymatic processing, targeting, and the membrane insertion of nascent chains at the exit of the ribosomal tunnel. uL1 forms part of the L1 stalk, a mobile element that plays a role in evacuating the exit-site tRNA. The polypeptide is Large ribosomal subunit protein uL1A (Saccharomyces cerevisiae (strain ATCC 204508 / S288c) (Baker's yeast)).